Consider the following 102-residue polypeptide: Carboxysome shell protein CcmK2 (102 aa).

In terms of domain architecture, BMC spans Ala-4–Pro-90.

It belongs to the bacterial microcompartments protein family. CcmK subfamily. Homohexamer. Interacts with CcmO in the carboxysome. Interacts with CcmN.

It localises to the carboxysome. One of the shell proteins of the carboxysome, a polyhedral inclusion where RuBisCO (ribulose bisphosphate carboxylase, rbcL-rbcS) is sequestered. Assembles into hexamers which make sheets that form the facets of the polyhedral carboxysome. The hexamer central pore probably regulates metabolite flux. Functionally, the major shell protein of the carboxysome, a polyhedral inclusion where RuBisCO (ribulose bisphosphate carboxylase, rbcL-rbcS) is sequestered. Hexamers make sheets that form the facets of the polyhedral carboxysome. The shell is 4.5 nm thick, as observed for CcmK hexamers. Required for recruitment of CcmO to the pre-carboxysome. In PCC 7942 there are several CcmK paralogs with presumably functional differences; replacing the central pore residues (34-37) with those of either CcmK4 from this organism (Tyr-Met-Arg-Ala) or from an alpha-type carboxysome forming cyanobacterium (CsoS1 of P.marinus strain MIT 9313, Arg-Glu-Phe-Val) allows the bacterium to make carboxysomes, but the expression level is too low to know if the carboxysome is functional for CO(2) fixation. In terms of biological role, beta-carboxysome assembly initiates when soluble RuBisCO is condensed into a liquid matrix in a pre-carboxysome by the RbcS-like domains of probably both CcmM58 and CcmM35. CcmN interacts with the N-terminus of CcmM58, and then recruits the CcmK2 major shell protein via CcmN's encapsulation peptide. Shell formation requires CcmK proteins and CcmO. CcmL caps the otherwise elongated carboxysome. Once fully encapsulated carboxysomes are formed, they migrate within the cell probably via interactions with the cytoskeleton. The polypeptide is Carboxysome shell protein CcmK2 (Synechococcus elongatus (strain ATCC 33912 / PCC 7942 / FACHB-805) (Anacystis nidulans R2)).